Consider the following 683-residue polypeptide: Multidrug resistance protein MdtO (683 aa).

Helical transmembrane passes span 43-63 (VILI…AVLF), 75-95 (FVAI…FLIY), 100-120 (GEPL…MFLM), 125-145 (LGLV…FPAM), 158-178 (WCIV…VLWF), 402-422 (FGGA…VMPW), 426-446 (IVEL…IATS), 457-477 (MVVT…YDLV), and 483-503 (ALGI…VWPE).

It belongs to the MdtO family. Could be part of a tripartite efflux system composed of MdtN, MdtO and MdtP.

The protein resides in the cell inner membrane. In terms of biological role, could be involved in resistance to puromycin, acriflavine and tetraphenylarsonium chloride. The protein is Multidrug resistance protein MdtO (mdtO) of Escherichia coli O6:H1 (strain CFT073 / ATCC 700928 / UPEC).